Consider the following 299-residue polypeptide: Tetrahydromethanopterin S-methyltransferase subunit E (299 aa).

Helical transmembrane passes span 57–77, 80–100, 133–153, 158–178, 237–257, and 261–281; these read AISGEPVSYGLYVAVAGSVAW, INAGLNAVLALIIGSGVAAIV, IGPIVGHGFIAVFTMVLAAYL, LGNPFPLPLVALIFGITVGAI, GLCFGLIIFLDGWRSIVGNII, and LVTKTSIALVVGLLVVVAAMI.

It belongs to the MtrE family. As to quaternary structure, the complex is composed of 8 subunits; MtrA, MtrB, MtrC, MtrD, MtrE, MtrF, MtrG and MtrH.

It localises to the cell membrane. It carries out the reaction 5-methyl-5,6,7,8-tetrahydromethanopterin + coenzyme M + 2 Na(+)(in) = 5,6,7,8-tetrahydromethanopterin + methyl-coenzyme M + 2 Na(+)(out). Its pathway is one-carbon metabolism; methanogenesis from CO(2); methyl-coenzyme M from 5,10-methylene-5,6,7,8-tetrahydromethanopterin: step 2/2. Its function is as follows. Part of a complex that catalyzes the formation of methyl-coenzyme M and tetrahydromethanopterin from coenzyme M and methyl-tetrahydromethanopterin. This is an energy-conserving, sodium-ion translocating step. The polypeptide is Tetrahydromethanopterin S-methyltransferase subunit E (Methanococcus vannielii (strain ATCC 35089 / DSM 1224 / JCM 13029 / OCM 148 / SB)).